Reading from the N-terminus, the 399-residue chain is Acetate kinase (399 aa).

Residue asparagine 7 coordinates Mg(2+). An ATP-binding site is contributed by lysine 14. Substrate is bound at residue arginine 89. The active-site Proton donor/acceptor is the aspartate 146. ATP is bound by residues 206–210 (HLGNG), 280–282 (DMR), and 328–332 (GIGEN). Residue glutamate 382 participates in Mg(2+) binding.

Belongs to the acetokinase family. As to quaternary structure, homodimer. Requires Mg(2+) as cofactor. Mn(2+) is required as a cofactor.

The protein resides in the cytoplasm. It catalyses the reaction acetate + ATP = acetyl phosphate + ADP. The protein operates within metabolic intermediate biosynthesis; acetyl-CoA biosynthesis; acetyl-CoA from acetate: step 1/2. Its function is as follows. Catalyzes the formation of acetyl phosphate from acetate and ATP. Can also catalyze the reverse reaction. The chain is Acetate kinase from Campylobacter fetus subsp. fetus (strain 82-40).